Reading from the N-terminus, the 375-residue chain is Tyrosine--tRNA ligase (375 aa).

L-tyrosine contacts are provided by tyrosine 37, tyrosine 168, glutamine 172, aspartate 175, and glutamine 190. The 'KMSKS' region signature appears at 251 to 255 (KMSKS). Lysine 254 serves as a coordination point for ATP.

The protein belongs to the class-I aminoacyl-tRNA synthetase family. TyrS type 4 subfamily. Homodimer.

It localises to the cytoplasm. It carries out the reaction tRNA(Tyr) + L-tyrosine + ATP = L-tyrosyl-tRNA(Tyr) + AMP + diphosphate + H(+). Functionally, catalyzes the attachment of tyrosine to tRNA(Tyr) in a two-step reaction: tyrosine is first activated by ATP to form Tyr-AMP and then transferred to the acceptor end of tRNA(Tyr). In Pyrococcus abyssi (strain GE5 / Orsay), this protein is Tyrosine--tRNA ligase.